The primary structure comprises 210 residues: Guanylate kinase (210 aa).

The 181-residue stretch at 6–186 (GLLGIISAPS…ALIYLQSVIL (181 aa)) folds into the Guanylate kinase-like domain. ATP is bound at residue 13 to 20 (APSGAGKS).

The protein belongs to the guanylate kinase family.

Its subcellular location is the cytoplasm. It carries out the reaction GMP + ATP = GDP + ADP. Its function is as follows. Essential for recycling GMP and indirectly, cGMP. This chain is Guanylate kinase, found in Blochmanniella floridana.